The chain runs to 347 residues: E3 ubiquitin-protein ligase RNF146-B (347 aa).

The RING-type zinc-finger motif lies at 37-75; sequence CAICLQTCVHPVSLPCKHVFCYLCVKGASWLGKRCALCR. Glycyl lysine isopeptide (Lys-Gly) (interchain with G-Cter in ubiquitin) cross-links involve residues lysine 85, lysine 95, lysine 131, and lysine 176. Residues 92–168 form the WWE domain; sequence EELKAASRGN…EHGRRRKIKR (77 aa). 2 disordered regions span residues 196 to 241 and 257 to 347; these read SSAD…GTSL and ERSH…VTEV. Residues 203-217 are compositionally biased toward low complexity; that stretch reads SVPAQSGASVQSSSV. Residues 282–296 are compositionally biased toward acidic residues; that stretch reads SIEETESDASSDSED. Serine 288 and serine 292 each carry phosphoserine. The span at 304–322 shows a compositional bias: polar residues; the sequence is HSLTQQRLLVPNPSQTVSD.

As to quaternary structure, interacts with poly-ADP-ribosylated AXIN1, AXIN2, BLZF1 and CASC3. In terms of processing, ubiquitinated; autoubiquitinated. Autoubiquitination is enhanced upon poly(ADP-ribose)-binding.

The protein resides in the cytoplasm. It localises to the cytosol. The catalysed reaction is S-ubiquitinyl-[E2 ubiquitin-conjugating enzyme]-L-cysteine + [acceptor protein]-L-lysine = [E2 ubiquitin-conjugating enzyme]-L-cysteine + N(6)-ubiquitinyl-[acceptor protein]-L-lysine.. It functions in the pathway protein modification; protein ubiquitination. E3 ubiquitin-protein ligase that specifically binds poly-ADP-ribosylated proteins and mediates their ubiquitination and subsequent degradation. Acts as an activator of the Wnt signaling pathway by mediating the ubiquitination of poly-ADP-ribosylated AXIN1 and AXIN2, 2 key components of the beta-catenin destruction complex. Acts in cooperation with tankyrase proteins (TNKS and TNKS2), which mediate poly-ADP-ribosylation of target proteins AXIN1, AXIN2, BLZF1, CASC3, TNKS and TNKS2. Recognizes and binds tankyrase-dependent poly-ADP-ribosylated proteins via its WWE domain and mediates their ubiquitination. This Bos taurus (Bovine) protein is E3 ubiquitin-protein ligase RNF146-B (RNF146B).